The primary structure comprises 134 residues: ATP synthase epsilon chain, chloroplastic (134 aa).

The protein belongs to the ATPase epsilon chain family. In terms of assembly, F-type ATPases have 2 components, CF(1) - the catalytic core - and CF(0) - the membrane proton channel. CF(1) has five subunits: alpha(3), beta(3), gamma(1), delta(1), epsilon(1). CF(0) has three main subunits: a, b and c.

The protein resides in the plastid. It localises to the chloroplast thylakoid membrane. In terms of biological role, produces ATP from ADP in the presence of a proton gradient across the membrane. In Pelargonium hortorum (Common geranium), this protein is ATP synthase epsilon chain, chloroplastic.